The chain runs to 393 residues: G protein-activated inward rectifier potassium channel 3 (393 aa).

The segment at 1-23 (MAQENAAFSPGSEEPPRRRGRQR) is disordered. The Cytoplasmic portion of the chain corresponds to 1-57 (MAQENAAFSPGSEEPPRRRGRQRYVEKDGRCNVQQGNVRETYRYLTDLFTTLVDLQW). A helical membrane pass occupies residues 58-82 (RLSLLFFVLAYALTWLFFGAIWWLI). Residues 83-106 (AYGRGDLEHLEDTAWTPCVNNLNG) are Extracellular-facing. Residues 107-118 (FVAAFLFSIETE) constitute an intramembrane region (helical; Pore-forming). An intramembrane region (pore-forming) is located at residues 119–125 (TTIGYGH). The Selectivity filter signature appears at 120 to 125 (TIGYGH). At 126 to 134 (RVITDQCPE) the chain is on the extracellular side. The chain crosses the membrane as a helical span at residues 135 to 156 (GIVLLLLQAILGSMVNAFMVGC). Over 157–393 (MFVKISQPNK…LPPPESESKV (237 aa)) the chain is Cytoplasmic. The segment at 360–393 (KVEEEGAGEGAGAGDGADKEHNGCLPPPESESKV) is disordered. The span at 384 to 393 (LPPPESESKV) shows a compositional bias: pro residues. A PDZ-binding motif is present at residues 390-393 (ESKV).

The protein belongs to the inward rectifier-type potassium channel (TC 1.A.2.1) family. KCNJ9 subfamily. Associates with KCNJ3/GIRK1 to form a G-protein-activated heteromultimer pore-forming unit. Interacts (via PDZ-binding motif) with SNX27 (via PDZ domain); the interaction is required when endocytosed to prevent degradation in lysosomes and promote recycling to the plasma membrane. Expressed mainly in the brain, some expression in the skeletal muscle.

It localises to the membrane. The catalysed reaction is K(+)(in) = K(+)(out). Functionally, inward rectifier potassium channels are characterized by a greater tendency to allow potassium to flow into the cell rather than out of it. Their voltage dependence is regulated by the concentration of extracellular potassium; as external potassium is raised, the voltage range of the channel opening shifts to more positive voltages. The inward rectification is mainly due to the blockage of outward current by internal magnesium. This receptor is controlled by G proteins. Unable to produce channel activity when expressed alone. Forms a functional channel in association with KCNJ3/GIRK1. The protein is G protein-activated inward rectifier potassium channel 3 (Kcnj9) of Mus musculus (Mouse).